The primary structure comprises 133 residues: MNAPVWWQQLLLAMTGGALGSGLRFAIGASLIQRFGTGFPWGTLTVNLLGSFVAGVLLVWLDARGPSSWPLRALLIVGVIGGLTTFSSLMMECLVFARTDRSTMIGIYLAVTLLAGLALVVAGARTGQWLVAR.

The next 4 membrane-spanning stretches (helical) occupy residues 12–32 (LAMT…ASLI), 41–61 (WGTL…LVWL), 76–96 (IVGV…CLVF), and 104–124 (MIGI…VAGA). Na(+) is bound by residues Gly81 and Thr84.

This sequence belongs to the fluoride channel Fluc/FEX (TC 1.A.43) family.

It localises to the cell inner membrane. It catalyses the reaction fluoride(in) = fluoride(out). Na(+) is not transported, but it plays an essential structural role and its presence is essential for fluoride channel function. Functionally, fluoride-specific ion channel. Important for reducing fluoride concentration in the cell, thus reducing its toxicity. This Xanthomonas euvesicatoria pv. vesicatoria (strain 85-10) (Xanthomonas campestris pv. vesicatoria) protein is Fluoride-specific ion channel FluC.